The chain runs to 89 residues: Barrier-to-autointegration factor 1 (89 aa).

Belongs to the BAF family. As to quaternary structure, interacts with emr-1 and lem-2. Interacts with lem-4l, leading to decreased phosphorylation by VRK1 and promoting dephosphorylation by protein phosphatase 2A (PP2A). In terms of processing, phosphorylated by vrk-1. Phosphorylation by vrk-1 in mitosis is essential to achieve correct timing of recruitment of nuclear envelope components during nuclear envelope assembly. Dephosphorylated by protein phosphatase 2A (PP2A) following interaction with lem-4l during mitotic exit, leading to mitotic nuclear envelope reassembly.

It localises to the nucleus. In terms of biological role, DNA-binding protein which plays an essential role in nuclear envelope formation. Required for normal chromosome segregation during mitosis. Associates with the nuclear lamina via its interaction with LEM domain containing proteins emr-1 and lem-2. In association with lem-3, plays a role in radiation-induced DNA damage repair response. This is Barrier-to-autointegration factor 1 (baf-1) from Caenorhabditis elegans.